The primary structure comprises 337 residues: Ribosomal RNA small subunit methyltransferase H (337 aa).

Residues 35-37, Asp-54, Phe-81, Asp-102, and Gln-109 each bind S-adenosyl-L-methionine; that span reads GGY. The disordered stretch occupies residues 286–316; sequence PVGPSEAEAAANPRARSAKLRAGERTDAPAP. The span at 289 to 300 shows a compositional bias: low complexity; the sequence is PSEAEAAANPRA.

It belongs to the methyltransferase superfamily. RsmH family.

The protein localises to the cytoplasm. It carries out the reaction cytidine(1402) in 16S rRNA + S-adenosyl-L-methionine = N(4)-methylcytidine(1402) in 16S rRNA + S-adenosyl-L-homocysteine + H(+). In terms of biological role, specifically methylates the N4 position of cytidine in position 1402 (C1402) of 16S rRNA. The polypeptide is Ribosomal RNA small subunit methyltransferase H (Methylobacterium sp. (strain 4-46)).